A 473-amino-acid polypeptide reads, in one-letter code: Cannabinoid receptor 1 (473 aa).

Topologically, residues 1-118 are extracellular; it reads MKSILDGLAD…CFMILNPSQQ (118 aa). A required for mitochondrial localization region spans residues 2–23; the sequence is KSILDGLADTTFRTITTDLLYV. N79 and N85 each carry an N-linked (GlcNAc...) asparagine glycan. Residues 119-144 traverse the membrane as a helical segment; the sequence is LAIAVLSLTLGTFTVLENLLVLCVIL. Residues 145 to 156 lie on the Cytoplasmic side of the membrane; sequence HSRSLRCRPSYH. A helical membrane pass occupies residues 157-177; that stretch reads FIGSLAVADLLGSVIFVYSFV. Topologically, residues 178-189 are extracellular; it reads DFHVFHRKDSPN. The helical transmembrane segment at 190–214 threads the bilayer; the sequence is VFLFKLGGVTASFTASVGSLFLTAI. Residues 215–234 lie on the Cytoplasmic side of the membrane; the sequence is DRYISIHRPLAYKRIVTRPK. A helical membrane pass occupies residues 235 to 257; the sequence is AVVAFCVMWTIAIVIAVLPLLGW. At 258-275 the chain is on the extracellular side; sequence NCKKLNSVCSDIFPLIDE. A helical transmembrane segment spans residues 276–301; it reads TYLMFWIGVTSILLLFIVYAYMYILW. Residues 302–346 are Cytoplasmic-facing; the sequence is KAHSHAVRMLQRGTQKSIIIQSTEDGKVQITRPDQTRMDIRLAKT. A helical membrane pass occupies residues 347–367; that stretch reads LVLILVVLIICWGPLLAIMVY. The Extracellular portion of the chain corresponds to 368–379; sequence DVFGKMNKLIKT. A helical transmembrane segment spans residues 380 to 401; the sequence is IFAFCSMLCLLNSTVNPIIYAL. Topologically, residues 402–473 are cytoplasmic; that stretch reads RSKDLRHAFR…VSTDTTAEAL (72 aa). C417 carries the S-palmitoyl cysteine lipid modification.

This sequence belongs to the G-protein coupled receptor 1 family. Palmitoylation at Cys-417 is important for recruitment at both plasma membrane and lipid rafts and association with G protein alpha subunits.

The protein resides in the cell membrane. Its subcellular location is the mitochondrion outer membrane. It is found in the cell projection. The protein localises to the axon. It localises to the presynapse. Functionally, G-protein coupled receptor for cannabinoids. Mediates many cannabinoid-induced effects in the central nervous system (CNS), as well as in peripheral tissues. Regulates cellular respiration and energy production in response to cannabinoids. Signaling typically involves reduction in cyclic AMP. The chain is Cannabinoid receptor 1 (CNR1) from Taeniopygia guttata (Zebra finch).